A 252-amino-acid chain; its full sequence is Ribosomal RNA small subunit methyltransferase J (252 aa).

S-adenosyl-L-methionine is bound by residues 101–102 (RD), 117–118 (ER), 153–154 (SS), and aspartate 171.

This sequence belongs to the methyltransferase superfamily. RsmJ family.

Its subcellular location is the cytoplasm. The enzyme catalyses guanosine(1516) in 16S rRNA + S-adenosyl-L-methionine = N(2)-methylguanosine(1516) in 16S rRNA + S-adenosyl-L-homocysteine + H(+). Its function is as follows. Specifically methylates the guanosine in position 1516 of 16S rRNA. The polypeptide is Ribosomal RNA small subunit methyltransferase J (Pseudoalteromonas translucida (strain TAC 125)).